Reading from the N-terminus, the 567-residue chain is Hydrogenase-2 large chain (567 aa).

Cys-61, Cys-64, Cys-546, and Cys-549 together coordinate Ni(2+). Residues 553–567 (VVDADGNEVVSVKVL) constitute a propeptide that is removed on maturation.

It belongs to the [NiFe]/[NiFeSe] hydrogenase large subunit family. In terms of assembly, heterodimer of a large and a small subunit. The cofactor is Ni(2+).

It localises to the cell membrane. The catalysed reaction is H2 + A = AH2. In terms of biological role, this is one of three E.coli hydrogenases synthesized in response to different physiological conditions. HYD2 is involved in hydrogen uptake. This chain is Hydrogenase-2 large chain (hybC), found in Escherichia coli O157:H7.